The sequence spans 626 residues: Glucoamylase (626 aa).

A signal peptide spans 1-19; it reads MHLVSSLLVVGAAFQAVLG. Residues 20–35 constitute a propeptide that is removed on maturation; that stretch reads LPDPLHEKRHSDIIKR. N-linked (GlcNAc...) asparagine glycosylation is present at Asn-106. Trp-155 contacts substrate. Asn-206 is a glycosylation site (N-linked (GlcNAc...) asparagine). The active-site Proton acceptor is the Asp-211. Glu-214 acts as the Proton donor in catalysis. N-linked (GlcNAc...) asparagine glycosylation is present at Asn-217. A CBM20 domain is found at 520–626; the sequence is CAADHEVLVT…STATLDDTWR (107 aa).

This sequence belongs to the glycosyl hydrolase 15 family.

The enzyme catalyses Hydrolysis of terminal (1-&gt;4)-linked alpha-D-glucose residues successively from non-reducing ends of the chains with release of beta-D-glucose.. This chain is Glucoamylase (gla-1), found in Neurospora crassa (strain ATCC 24698 / 74-OR23-1A / CBS 708.71 / DSM 1257 / FGSC 987).